We begin with the raw amino-acid sequence, 173 residues long: Pathogenesis-related protein 1A/1B (173 aa).

The signal sequence occupies residues Met-1–Ala-20.

Belongs to the thaumatin family.

The polypeptide is Pathogenesis-related protein 1A/1B (Hordeum vulgare (Barley)).